The following is a 161-amino-acid chain: MYRIGNGIDFHRLEINPNRPLVLGGVECESEVALVGHSDADIILHAISDAILGALALGDIGQYFPDTDPKLKNIDSKIILAKCLELMKERNFQLVNVDCTVIGEKPKIAPLKEKIKKSLCSLLDLPVDCVSVKATTTEKMGALGRQEGIGTFCTILLVKNL.

Asp9 and His11 together coordinate a divalent metal cation. 4-CDP-2-C-methyl-D-erythritol 2-phosphate contacts are provided by residues 9–11 and 37–38; these read DFH and HS. His45 contacts a divalent metal cation. Residues 59–61, 64–68, 135–138, and Arg145 each bind 4-CDP-2-C-methyl-D-erythritol 2-phosphate; these read DIG, FPDTD, and TTTE.

This sequence belongs to the IspF family. As to quaternary structure, homotrimer. Requires a divalent metal cation as cofactor.

It carries out the reaction 4-CDP-2-C-methyl-D-erythritol 2-phosphate = 2-C-methyl-D-erythritol 2,4-cyclic diphosphate + CMP. Its pathway is isoprenoid biosynthesis; isopentenyl diphosphate biosynthesis via DXP pathway; isopentenyl diphosphate from 1-deoxy-D-xylulose 5-phosphate: step 4/6. In terms of biological role, involved in the biosynthesis of isopentenyl diphosphate (IPP) and dimethylallyl diphosphate (DMAPP), two major building blocks of isoprenoid compounds. Catalyzes the conversion of 4-diphosphocytidyl-2-C-methyl-D-erythritol 2-phosphate (CDP-ME2P) to 2-C-methyl-D-erythritol 2,4-cyclodiphosphate (ME-CPP) with a corresponding release of cytidine 5-monophosphate (CMP). This chain is 2-C-methyl-D-erythritol 2,4-cyclodiphosphate synthase, found in Leptospira borgpetersenii serovar Hardjo-bovis (strain JB197).